Consider the following 635-residue polypeptide: DNA primase (635 aa).

The CHC2-type zinc-finger motif lies at 41–65; the sequence is CPFHDEKSPSFSVSPAKQMYYCFGC. The Toprim domain occupies 265–348; sequence DEAILVEGYF…SGQVNLRILN (84 aa). Mg(2+)-binding residues include E271, D317, and D319.

The protein belongs to the DnaG primase family. In terms of assembly, monomer. Interacts with DnaB. It depends on Zn(2+) as a cofactor. Requires Mg(2+) as cofactor.

The enzyme catalyses ssDNA + n NTP = ssDNA/pppN(pN)n-1 hybrid + (n-1) diphosphate.. In terms of biological role, RNA polymerase that catalyzes the synthesis of short RNA molecules used as primers for DNA polymerase during DNA replication. This chain is DNA primase, found in Synechocystis sp. (strain ATCC 27184 / PCC 6803 / Kazusa).